A 162-amino-acid chain; its full sequence is 2-C-methyl-D-erythritol 2,4-cyclodiphosphate synthase (162 aa).

Aspartate 10 and histidine 12 together coordinate a divalent metal cation. 4-CDP-2-C-methyl-D-erythritol 2-phosphate contacts are provided by residues aspartate 10–histidine 12 and histidine 36–serine 37. Histidine 44 is an a divalent metal cation binding site. 4-CDP-2-C-methyl-D-erythritol 2-phosphate is bound by residues aspartate 58 to glycine 60, phenylalanine 63 to aspartate 67, alanine 102 to alanine 108, threonine 134 to glutamate 137, phenylalanine 141, and arginine 144.

It belongs to the IspF family. In terms of assembly, homotrimer. A divalent metal cation serves as cofactor.

It carries out the reaction 4-CDP-2-C-methyl-D-erythritol 2-phosphate = 2-C-methyl-D-erythritol 2,4-cyclic diphosphate + CMP. The protein operates within isoprenoid biosynthesis; isopentenyl diphosphate biosynthesis via DXP pathway; isopentenyl diphosphate from 1-deoxy-D-xylulose 5-phosphate: step 4/6. In terms of biological role, involved in the biosynthesis of isopentenyl diphosphate (IPP) and dimethylallyl diphosphate (DMAPP), two major building blocks of isoprenoid compounds. Catalyzes the conversion of 4-diphosphocytidyl-2-C-methyl-D-erythritol 2-phosphate (CDP-ME2P) to 2-C-methyl-D-erythritol 2,4-cyclodiphosphate (ME-CPP) with a corresponding release of cytidine 5-monophosphate (CMP). This chain is 2-C-methyl-D-erythritol 2,4-cyclodiphosphate synthase, found in Pseudoalteromonas atlantica (strain T6c / ATCC BAA-1087).